We begin with the raw amino-acid sequence, 155 residues long: Interleukin-2 (155 aa).

The signal sequence occupies residues methionine 1 to glycine 20. A glycan (O-linked (GalNAc...) threonine) is linked at threonine 23. Cysteine 79 and cysteine 127 are oxidised to a cystine.

The protein belongs to the IL-2 family.

Its subcellular location is the secreted. In terms of biological role, cytokine produced by activated CD4-positive helper T-cells and to a lesser extend activated CD8-positive T-cells and natural killer (NK) cells that plays pivotal roles in the immune response and tolerance. Binds to a receptor complex composed of either the high-affinity trimeric IL-2R (IL2RA/CD25, IL2RB/CD122 and IL2RG/CD132) or the low-affinity dimeric IL-2R (IL2RB and IL2RG). Interaction with the receptor leads to oligomerization and conformation changes in the IL-2R subunits resulting in downstream signaling starting with phosphorylation of JAK1 and JAK3. In turn, JAK1 and JAK3 phosphorylate the receptor to form a docking site leading to the phosphorylation of several substrates including STAT5. This process leads to activation of several pathways including STAT, phosphoinositide-3-kinase/PI3K and mitogen-activated protein kinase/MAPK pathways. Functions as a T-cell growth factor and can increase NK-cell cytolytic activity as well. Promotes strong proliferation of activated B-cells and subsequently immunoglobulin production. Plays a pivotal role in regulating the adaptive immune system by controlling the survival and proliferation of regulatory T-cells, which are required for the maintenance of immune tolerance. Moreover, participates in the differentiation and homeostasis of effector T-cell subsets, including Th1, Th2, Th17 as well as memory CD8-positive T-cells. The chain is Interleukin-2 (IL2) from Bos taurus (Bovine).